Consider the following 434-residue polypeptide: Glutamyl-tRNA reductase (434 aa).

Substrate contacts are provided by residues 49-52 (TCNR), Ser107, 112-114 (EPQ), and Gln118. Residue Cys50 is the Nucleophile of the active site. 187–192 (GAGETV) lines the NADP(+) pocket.

It belongs to the glutamyl-tRNA reductase family. In terms of assembly, homodimer.

The enzyme catalyses (S)-4-amino-5-oxopentanoate + tRNA(Glu) + NADP(+) = L-glutamyl-tRNA(Glu) + NADPH + H(+). It participates in porphyrin-containing compound metabolism; protoporphyrin-IX biosynthesis; 5-aminolevulinate from L-glutamyl-tRNA(Glu): step 1/2. Its function is as follows. Catalyzes the NADPH-dependent reduction of glutamyl-tRNA(Glu) to glutamate 1-semialdehyde (GSA). This Hydrogenovibrio crunogenus (strain DSM 25203 / XCL-2) (Thiomicrospira crunogena) protein is Glutamyl-tRNA reductase.